Consider the following 369-residue polypeptide: Putative glutamate--cysteine ligase 2-1 (369 aa).

Belongs to the glutamate--cysteine ligase type 2 family. YbdK subfamily.

The enzyme catalyses L-cysteine + L-glutamate + ATP = gamma-L-glutamyl-L-cysteine + ADP + phosphate + H(+). ATP-dependent carboxylate-amine ligase which exhibits weak glutamate--cysteine ligase activity. This chain is Putative glutamate--cysteine ligase 2-1, found in Rhodococcus jostii (strain RHA1).